The primary structure comprises 222 residues: Probable GTP-binding protein EngB (222 aa).

The EngB-type G domain occupies 23–217 (NASEIVFLGR…REEIVKYTLG (195 aa)). GTP contacts are provided by residues 31 to 38 (GRSNVGKS), 57 to 61 (GKTQL), 82 to 85 (DLPG), 152 to 155 (TKAD), and 191 to 193 (FSA). The Mg(2+) site is built by S38 and T59.

This sequence belongs to the TRAFAC class TrmE-Era-EngA-EngB-Septin-like GTPase superfamily. EngB GTPase family. Requires Mg(2+) as cofactor.

Necessary for normal cell division and for the maintenance of normal septation. The sequence is that of Probable GTP-binding protein EngB from Helicobacter hepaticus (strain ATCC 51449 / 3B1).